A 152-amino-acid chain; its full sequence is Large ribosomal subunit protein bL9 (152 aa).

It belongs to the bacterial ribosomal protein bL9 family.

Its function is as follows. Binds to the 23S rRNA. The protein is Large ribosomal subunit protein bL9 of Mycobacterium bovis (strain ATCC BAA-935 / AF2122/97).